Here is a 77-residue protein sequence, read N- to C-terminus: Anionic peptide 17.1 (77 aa).

The N-terminal stretch at 1 to 24 (MASKTVLVLLLVSVLVSTFCTAKA) is a signal peptide.

It belongs to the non-disulfide-bridged peptide (NDBP) superfamily. Long chain multifunctional peptide (group 2) family. Expressed by the venom gland.

Its subcellular location is the secreted. The protein is Anionic peptide 17.1 of Lychas mucronatus (Chinese swimming scorpion).